The chain runs to 405 residues: L-rhamnonate dehydratase (405 aa).

Residues His33 and Arg59 each coordinate substrate. Positions 226, 252, and 280 each coordinate Mg(2+). The Proton acceptor role is filled by His329. Glu349 lines the substrate pocket.

This sequence belongs to the mandelate racemase/muconate lactonizing enzyme family. RhamD subfamily. Homooctamer; tetramer of dimers. Mg(2+) is required as a cofactor.

It carries out the reaction L-rhamnonate = 2-dehydro-3-deoxy-L-rhamnonate + H2O. Catalyzes the dehydration of L-rhamnonate to 2-keto-3-deoxy-L-rhamnonate (KDR). Can also dehydrate L-lyxonate and L-mannonate, although less efficiently, but not 2-keto-4-hydroxyheptane-1,7-dioate. The sequence is that of L-rhamnonate dehydratase (rhmD) from Salmonella typhimurium (strain LT2 / SGSC1412 / ATCC 700720).